The primary structure comprises 573 residues: Sulfite reductase [NADPH] hemoprotein beta-component (573 aa).

Cys438, Cys444, Cys483, and Cys487 together coordinate [4Fe-4S] cluster. Cys487 contributes to the siroheme binding site.

The protein belongs to the nitrite and sulfite reductase 4Fe-4S domain family. In terms of assembly, alpha(8)-beta(8). The alpha component is a flavoprotein, the beta component is a hemoprotein. It depends on siroheme as a cofactor. The cofactor is [4Fe-4S] cluster.

It carries out the reaction hydrogen sulfide + 3 NADP(+) + 3 H2O = sulfite + 3 NADPH + 4 H(+). It functions in the pathway sulfur metabolism; hydrogen sulfide biosynthesis; hydrogen sulfide from sulfite (NADPH route): step 1/1. Functionally, component of the sulfite reductase complex that catalyzes the 6-electron reduction of sulfite to sulfide. This is one of several activities required for the biosynthesis of L-cysteine from sulfate. In Nitrosomonas eutropha (strain DSM 101675 / C91 / Nm57), this protein is Sulfite reductase [NADPH] hemoprotein beta-component.